The primary structure comprises 626 residues: Putative folylpolyglutamate synthase (626 aa).

144–147 contributes to the ATP binding site; it reads GKGS. The Mg(2+) site is built by Ser168, Glu235, and His263. 2 residues coordinate ATP: Arg412 and Asp430.

Belongs to the folylpolyglutamate synthase family.

It carries out the reaction (6S)-5,6,7,8-tetrahydrofolyl-(gamma-L-Glu)(n) + L-glutamate + ATP = (6S)-5,6,7,8-tetrahydrofolyl-(gamma-L-Glu)(n+1) + ADP + phosphate + H(+). It participates in cofactor biosynthesis; tetrahydrofolylpolyglutamate biosynthesis. Conversion of folates to polyglutamate derivatives. The sequence is that of Putative folylpolyglutamate synthase (folC) from Dictyostelium discoideum (Social amoeba).